Consider the following 265-residue polypeptide: tRNA pseudouridine synthase A (265 aa).

Aspartate 58 acts as the Nucleophile in catalysis. Tyrosine 116 is a binding site for substrate.

It belongs to the tRNA pseudouridine synthase TruA family. Homodimer.

It catalyses the reaction uridine(38/39/40) in tRNA = pseudouridine(38/39/40) in tRNA. Formation of pseudouridine at positions 38, 39 and 40 in the anticodon stem and loop of transfer RNAs. The sequence is that of tRNA pseudouridine synthase A from Neisseria gonorrhoeae (strain NCCP11945).